We begin with the raw amino-acid sequence, 598 residues long: Aspartate--tRNA ligase (598 aa).

Glu-175 provides a ligand contact to L-aspartate. Residues 199–202 (QLFK) form an aspartate region. Residue Arg-221 participates in L-aspartate binding. Residues 221-223 (RDE) and Gln-230 contribute to the ATP site. His-450 is an L-aspartate binding site. ATP is bound at residue Glu-486. An L-aspartate-binding site is contributed by Arg-493. 538–541 (GLDR) is an ATP binding site.

Belongs to the class-II aminoacyl-tRNA synthetase family. Type 1 subfamily. Homodimer.

The protein resides in the cytoplasm. The catalysed reaction is tRNA(Asp) + L-aspartate + ATP = L-aspartyl-tRNA(Asp) + AMP + diphosphate. Catalyzes the attachment of L-aspartate to tRNA(Asp) in a two-step reaction: L-aspartate is first activated by ATP to form Asp-AMP and then transferred to the acceptor end of tRNA(Asp). The sequence is that of Aspartate--tRNA ligase from Lactiplantibacillus plantarum (strain ATCC BAA-793 / NCIMB 8826 / WCFS1) (Lactobacillus plantarum).